A 294-amino-acid polypeptide reads, in one-letter code: 4-hydroxy-tetrahydrodipicolinate synthase (294 aa).

Threonine 45 is a pyruvate binding site. Catalysis depends on tyrosine 133, which acts as the Proton donor/acceptor. Lysine 162 (schiff-base intermediate with substrate) is an active-site residue. Isoleucine 204 serves as a coordination point for pyruvate.

Belongs to the DapA family. In terms of assembly, homotetramer; dimer of dimers.

It localises to the cytoplasm. It carries out the reaction L-aspartate 4-semialdehyde + pyruvate = (2S,4S)-4-hydroxy-2,3,4,5-tetrahydrodipicolinate + H2O + H(+). It functions in the pathway amino-acid biosynthesis; L-lysine biosynthesis via DAP pathway; (S)-tetrahydrodipicolinate from L-aspartate: step 3/4. With respect to regulation, is allosterically regulated by the feedback inhibitor (S)-lysine. In terms of biological role, catalyzes the condensation of (S)-aspartate-beta-semialdehyde [(S)-ASA] and pyruvate to 4-hydroxy-tetrahydrodipicolinate (HTPA). The protein is 4-hydroxy-tetrahydrodipicolinate synthase of Agrobacterium fabrum (strain C58 / ATCC 33970) (Agrobacterium tumefaciens (strain C58)).